The following is a 274-amino-acid chain: NH(3)-dependent NAD(+) synthetase (274 aa).

Position 46–53 (46–53 (GISGGQDS)) interacts with ATP. Asp52 is a Mg(2+) binding site. Arg140 provides a ligand contact to deamido-NAD(+). Thr160 lines the ATP pocket. Mg(2+) is bound at residue Glu165. Residues Lys173 and Asp180 each contribute to the deamido-NAD(+) site. ATP-binding residues include Lys189 and Thr211. Position 260 to 261 (260 to 261 (HK)) interacts with deamido-NAD(+).

Belongs to the NAD synthetase family. As to quaternary structure, homodimer.

The enzyme catalyses deamido-NAD(+) + NH4(+) + ATP = AMP + diphosphate + NAD(+) + H(+). It participates in cofactor biosynthesis; NAD(+) biosynthesis; NAD(+) from deamido-NAD(+) (ammonia route): step 1/1. Its function is as follows. Catalyzes the ATP-dependent amidation of deamido-NAD to form NAD. Uses ammonia as a nitrogen source. The protein is NH(3)-dependent NAD(+) synthetase of Streptococcus pneumoniae (strain Hungary19A-6).